We begin with the raw amino-acid sequence, 313 residues long: Ribosomal RNA small subunit methyltransferase H (313 aa).

Residues 35 to 37 (GGH), Asp-55, Phe-79, Asp-101, and Gln-108 contribute to the S-adenosyl-L-methionine site.

The protein belongs to the methyltransferase superfamily. RsmH family.

The protein localises to the cytoplasm. The catalysed reaction is cytidine(1402) in 16S rRNA + S-adenosyl-L-methionine = N(4)-methylcytidine(1402) in 16S rRNA + S-adenosyl-L-homocysteine + H(+). Functionally, specifically methylates the N4 position of cytidine in position 1402 (C1402) of 16S rRNA. This chain is Ribosomal RNA small subunit methyltransferase H, found in Escherichia coli O6:H1 (strain CFT073 / ATCC 700928 / UPEC).